The sequence spans 353 residues: MSMSTVPACIEPVAPLAPQAQDLRCFNTLGLASHAPAFVALTEPSQLPALSALAPRFRQLVVLGGGSNVVLPASIDGLVAQVRLPGVRLVGQCADAWVVEAAAGENWHGFVTACVDNGWDGLENLALIPGTVGAAPVQNIGAYGVELADRFHSLTAWDVKGGRWVEMGAAECRFAYRDSFFKHQEPGAWVIGSVRFALPRPWQPVLDYPDLQRHAALDGAAPTARAVYDAVCAIRRAKLPDPAVVGNAGSFFKNPLVDAGTRQALLGRFPGLVSYPQPDGRYKLAAGWLIDQCGWKGRQLGAAGVHDRQALVLVNRGGAQARDIMALAAAIQGDVERRYGVRLEPEPVVVPAR.

One can recognise an FAD-binding PCMH-type domain in the interval 31 to 201; that stretch reads LASHAPAFVA…GSVRFALPRP (171 aa). The active site involves arginine 177. Serine 250 functions as the Proton donor in the catalytic mechanism. Glutamate 346 is a catalytic residue.

This sequence belongs to the MurB family. The cofactor is FAD.

It is found in the cytoplasm. The catalysed reaction is UDP-N-acetyl-alpha-D-muramate + NADP(+) = UDP-N-acetyl-3-O-(1-carboxyvinyl)-alpha-D-glucosamine + NADPH + H(+). It functions in the pathway cell wall biogenesis; peptidoglycan biosynthesis. Its function is as follows. Cell wall formation. This is UDP-N-acetylenolpyruvoylglucosamine reductase from Bordetella parapertussis (strain 12822 / ATCC BAA-587 / NCTC 13253).